The primary structure comprises 346 residues: tRNA N6-adenosine threonylcarbamoyltransferase (346 aa).

Residues His109, His113, and Tyr135 each contribute to the Fe cation site. Substrate contacts are provided by residues 135–139 (YVSGG), Asp167, Gly180, Glu184, and Asn263. Asp291 contributes to the Fe cation binding site.

This sequence belongs to the KAE1 / TsaD family. In terms of assembly, monomer. Component of the KEOPS complex that consists of Kae1, Bud32, Cgi121 and Pcc1; the whole complex dimerizes. Fe(2+) serves as cofactor.

The protein localises to the cytoplasm. It catalyses the reaction L-threonylcarbamoyladenylate + adenosine(37) in tRNA = N(6)-L-threonylcarbamoyladenosine(37) in tRNA + AMP + H(+). Its function is as follows. Required for the formation of a threonylcarbamoyl group on adenosine at position 37 (t(6)A37) in tRNAs that read codons beginning with adenine. Is a component of the KEOPS complex that is probably involved in the transfer of the threonylcarbamoyl moiety of threonylcarbamoyl-AMP (TC-AMP) to the N6 group of A37. Kae1 likely plays a direct catalytic role in this reaction, but requires other protein(s) of the complex to fulfill this activity. In Methanopyrus kandleri (strain AV19 / DSM 6324 / JCM 9639 / NBRC 100938), this protein is tRNA N6-adenosine threonylcarbamoyltransferase.